A 273-amino-acid chain; its full sequence is Imidazole glycerol phosphate synthase subunit HisF (273 aa).

Catalysis depends on residues aspartate 11 and aspartate 134.

This sequence belongs to the HisA/HisF family. In terms of assembly, heterodimer of HisH and HisF.

The protein localises to the cytoplasm. The enzyme catalyses 5-[(5-phospho-1-deoxy-D-ribulos-1-ylimino)methylamino]-1-(5-phospho-beta-D-ribosyl)imidazole-4-carboxamide + L-glutamine = D-erythro-1-(imidazol-4-yl)glycerol 3-phosphate + 5-amino-1-(5-phospho-beta-D-ribosyl)imidazole-4-carboxamide + L-glutamate + H(+). The protein operates within amino-acid biosynthesis; L-histidine biosynthesis; L-histidine from 5-phospho-alpha-D-ribose 1-diphosphate: step 5/9. In terms of biological role, IGPS catalyzes the conversion of PRFAR and glutamine to IGP, AICAR and glutamate. The HisF subunit catalyzes the cyclization activity that produces IGP and AICAR from PRFAR using the ammonia provided by the HisH subunit. This Methanosarcina mazei (strain ATCC BAA-159 / DSM 3647 / Goe1 / Go1 / JCM 11833 / OCM 88) (Methanosarcina frisia) protein is Imidazole glycerol phosphate synthase subunit HisF.